We begin with the raw amino-acid sequence, 78 residues long: U-scoloptoxin(13)-Er1a (78 aa).

Residues 1-24 (MFPSWSTTFVLCMGLCSLMNGALA) form the signal peptide.

The protein belongs to the scoloptoxin-13 family. Contains 4 disulfide bonds. In terms of tissue distribution, expressed by the venom gland.

The protein localises to the secreted. The polypeptide is U-scoloptoxin(13)-Er1a (Ethmostigmus rubripes (Giant centipede)).